Here is a 535-residue protein sequence, read N- to C-terminus: EH domain-containing protein 3 (535 aa).

At methionine 1 the chain carries N-acetylmethionine. One can recognise a Dynamin-type G domain in the interval 55–286 (FDNKPMVLLV…DLFKDIQSLP (232 aa)). Positions 65–72 (GQYSTGKT) are G1 motif. An ATP-binding site is contributed by 65–72 (GQYSTGKT). The tract at residues 91 to 92 (EP) is G2 motif. The G3 motif stretch occupies residues 153-156 (DTPG). A coiled-coil region spans residues 198–227 (DEFSEVIKALKNHEDKMRVVLNKADQIETQ). Residues 219–222 (NKAD) form a G4 motif region. Residue lysine 220 coordinates ATP. Isoleucine 243 is a region of interest (G5 motif). Tryptophan 258 contributes to the ATP binding site. A Glycyl lysine isopeptide (Lys-Gly) (interchain with G-Cter in SUMO) cross-link involves residue lysine 315. Residues serine 349 and serine 456 each carry the phosphoserine modification. One can recognise an EH domain in the interval 444–532 (DKPMYDEIFY…AHLLPPSKRK (89 aa)). Residues 476–511 (LPNSVLGKIWKLADIDKDGMLDDEEFALANHLIKVK) enclose the EF-hand domain. Aspartate 489, aspartate 491, aspartate 493, methionine 495, and glutamate 500 together coordinate Ca(2+). A Glycyl lysine isopeptide (Lys-Gly) (interchain with G-Cter in SUMO) cross-link involves residue lysine 511.

It belongs to the TRAFAC class dynamin-like GTPase superfamily. Dynamin/Fzo/YdjA family. EHD subfamily. Homooligomer, and heterooligomer with EHD1, EHD2 and EHD4, ATP-binding is required for heterooligomerization. Interacts with PACSIN1. Interacts with PACSIN2. Interacts (via EH domain) with MICALL1. Interacts (via EH domain) with RAB11FIP2. Interacts with ANK2. Interacts with CACNA1GG and CACNA1H.

The protein resides in the recycling endosome membrane. The protein localises to the cell membrane. Its subcellular location is the cell projection. It is found in the cilium membrane. ATP- and membrane-binding protein that controls membrane reorganization/tubulation upon ATP hydrolysis. In vitro causes tubulation of endocytic membranes. Binding to phosphatidic acid induces its membrane tubulation activity. Plays a role in endocytic transport. Involved in early endosome to recycling endosome compartment (ERC), retrograde early endosome to Golgi, and endosome to plasma membrane (rapid recycling) protein transport. Involved in the regulation of Golgi maintenance and morphology. Involved in the recycling of internalized D1 dopamine receptor. Plays a role in cardiac protein trafficking probably implicating ANK2. Involved in the ventricular membrane targeting of SLC8A1 and CACNA1C and probably the atrial membrane localization of CACNA1GG and CACNA1H implicated in the regulation of atrial myocyte excitability and cardiac conduction. In conjunction with EHD4 may be involved in endocytic trafficking of KDR/VEGFR2 implicated in control of glomerular function. Involved in the rapid recycling of integrin beta-3 implicated in cell adhesion maintenance. Involved in the unidirectional retrograde dendritic transport of endocytosed BACE1 and in efficient sorting of BACE1 to axons implicating a function in neuronal APP processing. Plays a role in the formation of the ciliary vesicle, an early step in cilium biogenesis; possibly sharing redundant functions with Ehd1. This is EH domain-containing protein 3 from Rattus norvegicus (Rat).